The sequence spans 637 residues: Anthranilate synthase, phenazine specific (637 aa).

Residues 1–434 (MSQAAARLME…QRQQTQSDFS (434 aa)) form an anthranilate synthase component I region. The Glutamine amidotransferase type-1 domain occupies 437–628 (QVLIVDAEDT…LRHALIHTPV (192 aa)). Active-site for GATase activity residues include Cys517, His602, and Glu604.

The enzyme catalyses chorismate + L-glutamine = anthranilate + pyruvate + L-glutamate + H(+). Its pathway is antibiotic biosynthesis; phenazine biosynthesis. Functionally, involved in the biosynthesis of the antibiotic, phenazine, a nitrogen-containing heterocyclic molecule having important roles in virulence, competition and biological control. The polypeptide is Anthranilate synthase, phenazine specific (phzE) (Pseudomonas fluorescens).